A 302-amino-acid chain; its full sequence is Lipoyl synthase (302 aa).

[4Fe-4S] cluster contacts are provided by C44, C49, C55, C70, C74, C77, and S283. The 217-residue stretch at 56–272 (WSKKHATVMI…ARVAKSKGFL (217 aa)) folds into the Radical SAM core domain.

The protein belongs to the radical SAM superfamily. Lipoyl synthase family. Requires [4Fe-4S] cluster as cofactor.

The protein localises to the cytoplasm. It catalyses the reaction [[Fe-S] cluster scaffold protein carrying a second [4Fe-4S](2+) cluster] + N(6)-octanoyl-L-lysyl-[protein] + 2 oxidized [2Fe-2S]-[ferredoxin] + 2 S-adenosyl-L-methionine + 4 H(+) = [[Fe-S] cluster scaffold protein] + N(6)-[(R)-dihydrolipoyl]-L-lysyl-[protein] + 4 Fe(3+) + 2 hydrogen sulfide + 2 5'-deoxyadenosine + 2 L-methionine + 2 reduced [2Fe-2S]-[ferredoxin]. Its pathway is protein modification; protein lipoylation via endogenous pathway; protein N(6)-(lipoyl)lysine from octanoyl-[acyl-carrier-protein]: step 2/2. Functionally, catalyzes the radical-mediated insertion of two sulfur atoms into the C-6 and C-8 positions of the octanoyl moiety bound to the lipoyl domains of lipoate-dependent enzymes, thereby converting the octanoylated domains into lipoylated derivatives. The protein is Lipoyl synthase of Orientia tsutsugamushi (strain Ikeda) (Rickettsia tsutsugamushi).